The chain runs to 112 residues: Divalent-cation tolerance protein CutA (112 aa).

Cu cation is bound by residues cysteine 16, histidine 83, and histidine 84.

The protein belongs to the CutA family. As to quaternary structure, homotrimer. Cu cation serves as cofactor.

The protein localises to the cytoplasm. Involved in resistance toward heavy metals. The protein is Divalent-cation tolerance protein CutA of Shigella boydii serotype 18 (strain CDC 3083-94 / BS512).